The chain runs to 235 residues: Ion-translocating oxidoreductase complex subunit E (235 aa).

Transmembrane regions (helical) follow at residues 63–83 (LGLS…ISLF), 93–113 (IPIY…LMNA), 117–137 (TLYQ…IIIG), 152–172 (IWDG…LGAL), and 206–226 (SFLL…LLAI).

The protein belongs to the NqrDE/RnfAE family. As to quaternary structure, the complex is composed of six subunits: RnfA, RnfB, RnfC, RnfD, RnfE and RnfG.

The protein resides in the cell inner membrane. Functionally, part of a membrane-bound complex that couples electron transfer with translocation of ions across the membrane. The chain is Ion-translocating oxidoreductase complex subunit E from Haemophilus influenzae (strain PittEE).